A 328-amino-acid polypeptide reads, in one-letter code: DNA-directed RNA polymerase subunit alpha (328 aa).

The interval 1–234 (MQTAVNEFLT…QQLAVFVDLE (234 aa)) is alpha N-terminal domain (alpha-NTD). The segment at 248 to 328 (IDPILLRPVD…NWPPASLKND (81 aa)) is alpha C-terminal domain (alpha-CTD).

The protein belongs to the RNA polymerase alpha chain family. Homodimer. The RNAP catalytic core consists of 2 alpha, 1 beta, 1 beta' and 1 omega subunit. When a sigma factor is associated with the core the holoenzyme is formed, which can initiate transcription.

The catalysed reaction is RNA(n) + a ribonucleoside 5'-triphosphate = RNA(n+1) + diphosphate. Functionally, DNA-dependent RNA polymerase catalyzes the transcription of DNA into RNA using the four ribonucleoside triphosphates as substrates. This is DNA-directed RNA polymerase subunit alpha from Cellvibrio japonicus (strain Ueda107) (Pseudomonas fluorescens subsp. cellulosa).